The chain runs to 94 residues: Large ribosomal subunit protein bL25 (94 aa).

This sequence belongs to the bacterial ribosomal protein bL25 family. In terms of assembly, part of the 50S ribosomal subunit; part of the 5S rRNA/L5/L18/L25 subcomplex. Contacts the 5S rRNA. Binds to the 5S rRNA independently of L5 and L18.

Functionally, this is one of the proteins that binds to the 5S RNA in the ribosome where it forms part of the central protuberance. The polypeptide is Large ribosomal subunit protein bL25 (Shigella boydii serotype 4 (strain Sb227)).